The chain runs to 612 residues: 1-deoxy-D-xylulose-5-phosphate synthase (612 aa).

Thiamine diphosphate-binding positions include H77 and G118–S120. D147 contributes to the Mg(2+) binding site. Thiamine diphosphate-binding positions include A148 to A149, N176, Y288, and E365. N176 contacts Mg(2+).

This sequence belongs to the transketolase family. DXPS subfamily. In terms of assembly, homodimer. The cofactor is Mg(2+). Requires thiamine diphosphate as cofactor.

The catalysed reaction is D-glyceraldehyde 3-phosphate + pyruvate + H(+) = 1-deoxy-D-xylulose 5-phosphate + CO2. Its pathway is metabolic intermediate biosynthesis; 1-deoxy-D-xylulose 5-phosphate biosynthesis; 1-deoxy-D-xylulose 5-phosphate from D-glyceraldehyde 3-phosphate and pyruvate: step 1/1. Functionally, catalyzes the acyloin condensation reaction between C atoms 2 and 3 of pyruvate and glyceraldehyde 3-phosphate to yield 1-deoxy-D-xylulose-5-phosphate (DXP). This chain is 1-deoxy-D-xylulose-5-phosphate synthase, found in Malacoplasma penetrans (strain HF-2) (Mycoplasma penetrans).